The primary structure comprises 836 residues: Protein-glutamine gamma-glutamyltransferase K (836 aa).

The span at 1-33 shows a compositional bias: basic and acidic residues; that stretch reads MDGPRSDMGRSDVSRSDMSRSDMGRSDMGRSDV. Disordered stretches follow at residues 1–68 and 89–125; these read MDGP…SRGG and DDWG…DGTI. Thr46 is subject to Phosphothreonine. A phosphoserine mark is found at Ser48, Ser98, and Ser112. Residues 89–112 show a composition bias toward basic and acidic residues; it reads DDWGREPSDSRDRGSSSRGGRPDS. Residues Cys397, His456, and Asp479 contribute to the active site. Ca(2+)-binding residues include Asn519, Asp521, Glu568, and Glu573. The residue at position 824 (Ser824) is a Phosphoserine.

The protein belongs to the transglutaminase superfamily. Transglutaminase family. In terms of assembly, interacts with PLAAT4. Ca(2+) serves as cofactor. Palmitoylated. In terms of processing, the membrane anchorage region possesses a cluster of five cysteines within which fatty acid(s) may become thioester-linked. It is subject to phorbol ester-stimulated phosphorylation and is hypersensitive to proteolysis, which releases the enzyme in a soluble form. Post-translationally, tyrosine-phosphorylated.

The protein localises to the membrane. The catalysed reaction is L-glutaminyl-[protein] + L-lysyl-[protein] = [protein]-L-lysyl-N(6)-5-L-glutamyl-[protein] + NH4(+). Inhibited by retinoic acid, but phorbol ester treatment activates it. Functionally, catalyzes the cross-linking of proteins and the conjugation of polyamines to proteins. Responsible for cross-linking epidermal proteins during formation of the stratum corneum. Involved in cell proliferation. The sequence is that of Protein-glutamine gamma-glutamyltransferase K (TGM1) from Oryctolagus cuniculus (Rabbit).